A 70-amino-acid polypeptide reads, in one-letter code: UPF0337 protein BC_3635 (70 aa).

Belongs to the UPF0337 (CsbD) family.

The protein is UPF0337 protein BC_3635 of Bacillus cereus (strain ATCC 14579 / DSM 31 / CCUG 7414 / JCM 2152 / NBRC 15305 / NCIMB 9373 / NCTC 2599 / NRRL B-3711).